A 532-amino-acid chain; its full sequence is Arginine--tRNA ligase (532 aa).

A 'HIGH' region motif is present at residues 122–132; the sequence is ANPTGPLHVAS.

It belongs to the class-I aminoacyl-tRNA synthetase family. Monomer.

Its subcellular location is the cytoplasm. It carries out the reaction tRNA(Arg) + L-arginine + ATP = L-arginyl-tRNA(Arg) + AMP + diphosphate. The polypeptide is Arginine--tRNA ligase (Elusimicrobium minutum (strain Pei191)).